The primary structure comprises 89 residues: Small ribosomal subunit protein uS15 (89 aa).

The span at 1-18 (MSLDTAEKQKLIENHQVH) shows a compositional bias: basic and acidic residues. Residues 1-23 (MSLDTAEKQKLIENHQVHPTDTG) are disordered.

It belongs to the universal ribosomal protein uS15 family. As to quaternary structure, part of the 30S ribosomal subunit. Forms a bridge to the 50S subunit in the 70S ribosome, contacting the 23S rRNA.

Its function is as follows. One of the primary rRNA binding proteins, it binds directly to 16S rRNA where it helps nucleate assembly of the platform of the 30S subunit by binding and bridging several RNA helices of the 16S rRNA. Forms an intersubunit bridge (bridge B4) with the 23S rRNA of the 50S subunit in the ribosome. The protein is Small ribosomal subunit protein uS15 of Prochlorococcus marinus (strain AS9601).